Reading from the N-terminus, the 262-residue chain is F-actin-capping protein subunit alpha (262 aa).

It belongs to the F-actin-capping protein alpha subunit family. In terms of assembly, heterodimer of an alpha and a beta subunit.

In terms of biological role, F-actin-capping proteins bind in a Ca(2+)-independent manner to the fast growing ends of actin filaments (barbed end) thereby blocking the exchange of subunits at these ends. Unlike other capping proteins (such as gelsolin and severin), these proteins do not sever actin filaments. This Candida glabrata (strain ATCC 2001 / BCRC 20586 / JCM 3761 / NBRC 0622 / NRRL Y-65 / CBS 138) (Yeast) protein is F-actin-capping protein subunit alpha (CAP1).